Reading from the N-terminus, the 141-residue chain is Protein Turandot Z (141 aa).

An N-terminal signal peptide occupies residues 1–23 (MYFAIRLSFVLAVLFCLTGNGNA).

This sequence belongs to the Turandot family.

The protein resides in the secreted. Functionally, a humoral factor that may play a role in stress tolerance. The protein is Protein Turandot Z of Drosophila yakuba (Fruit fly).